The sequence spans 78 residues: Exodeoxyribonuclease 7 small subunit (78 aa).

Belongs to the XseB family. Heterooligomer composed of large and small subunits.

The protein resides in the cytoplasm. It catalyses the reaction Exonucleolytic cleavage in either 5'- to 3'- or 3'- to 5'-direction to yield nucleoside 5'-phosphates.. In terms of biological role, bidirectionally degrades single-stranded DNA into large acid-insoluble oligonucleotides, which are then degraded further into small acid-soluble oligonucleotides. This chain is Exodeoxyribonuclease 7 small subunit, found in Synechococcus sp. (strain JA-3-3Ab) (Cyanobacteria bacterium Yellowstone A-Prime).